Consider the following 309-residue polypeptide: Porphobilinogen deaminase (309 aa).

S-(dipyrrolylmethanemethyl)cysteine is present on Cys242.

This sequence belongs to the HMBS family. In terms of assembly, monomer. Dipyrromethane serves as cofactor.

The enzyme catalyses 4 porphobilinogen + H2O = hydroxymethylbilane + 4 NH4(+). Its pathway is porphyrin-containing compound metabolism; protoporphyrin-IX biosynthesis; coproporphyrinogen-III from 5-aminolevulinate: step 2/4. Its function is as follows. Tetrapolymerization of the monopyrrole PBG into the hydroxymethylbilane pre-uroporphyrinogen in several discrete steps. In Shewanella frigidimarina (strain NCIMB 400), this protein is Porphobilinogen deaminase.